The following is a 213-amino-acid chain: 3-isopropylmalate dehydratase small subunit (213 aa).

The protein belongs to the LeuD family. LeuD type 1 subfamily. Heterodimer of LeuC and LeuD.

It catalyses the reaction (2R,3S)-3-isopropylmalate = (2S)-2-isopropylmalate. It functions in the pathway amino-acid biosynthesis; L-leucine biosynthesis; L-leucine from 3-methyl-2-oxobutanoate: step 2/4. In terms of biological role, catalyzes the isomerization between 2-isopropylmalate and 3-isopropylmalate, via the formation of 2-isopropylmaleate. This Neisseria meningitidis serogroup C / serotype 2a (strain ATCC 700532 / DSM 15464 / FAM18) protein is 3-isopropylmalate dehydratase small subunit.